We begin with the raw amino-acid sequence, 333 residues long: Serine racemase (333 aa).

Glu13 lines the Mg(2+) pocket. Ser31, Ser32, Ile33, Lys51, and Thr52 together coordinate ATP. Catalysis depends on Lys56, which acts as the Proton acceptor. Lys56 carries the post-translational modification N6-(pyridoxal phosphate)lysine. Pro69 contributes to the Ca(2+) binding site. Thr71 is subject to Phosphothreonine. Thr81 provides a ligand contact to Ca(2+). Ser84 functions as the Proton acceptor in the catalytic mechanism. Asn86 provides a ligand contact to pyridoxal 5'-phosphate. ATP is bound at residue Gln89. Position 113 is an S-nitrosocysteine (Cys113). Tyr121 contributes to the ATP binding site. Asn154 serves as a coordination point for pyridoxal 5'-phosphate. Mg(2+) is bound at residue Asp178. Residues Gly185, Gly186, Gly187, Gly188, and Met189 each contribute to the pyridoxal 5'-phosphate site. 4 residues coordinate Mg(2+): Glu210, Ala214, Asp216, and Asn247. The Ca(2+) site is built by Glu210, Ala214, Asp216, and Asn247. Glu210, Ala214, and Asp216 together coordinate Mn(2+). Residue Lys279 participates in ATP binding. Ser313 is a binding site for pyridoxal 5'-phosphate. Asn316 provides a ligand contact to ATP.

This sequence belongs to the serine/threonine dehydratase family. Homodimer. Mg(2+) serves as cofactor. Requires Mn(2+) as cofactor. The cofactor is Ca(2+). Pyridoxal 5'-phosphate is required as a cofactor. Post-translationally, S-nitrosylated, leading to decrease the enzyme activity. In terms of tissue distribution, expressed in the cerebellum and frontal cortex (at protein level).

It carries out the reaction L-serine = D-serine. It catalyses the reaction D-serine = pyruvate + NH4(+). The catalysed reaction is L-serine = pyruvate + NH4(+). Allosterically activated by magnesium, and possibly also other divalent metal cations. Allosterically activated by ATP, ADP or GTP. Competitively inhibited by malonate. Its function is as follows. Catalyzes the synthesis of D-serine from L-serine. D-serine is a key coagonist with glutamate at NMDA receptors. Has dehydratase activity towards both L-serine and D-serine. This is Serine racemase (Srr) from Rattus norvegicus (Rat).